Consider the following 336-residue polypeptide: Dihydroorotate dehydrogenase (quinone) (336 aa).

FMN contacts are provided by residues 62–66 (AGLDK) and threonine 86. Substrate is bound at residue lysine 66. 111 to 115 (NRMGF) lines the substrate pocket. FMN-binding residues include asparagine 139 and asparagine 172. A substrate-binding site is contributed by asparagine 172. Serine 175 (nucleophile) is an active-site residue. A substrate-binding site is contributed by asparagine 177. Residues lysine 217 and threonine 245 each contribute to the FMN site. Position 246–247 (246–247 (NT)) interacts with substrate. FMN contacts are provided by residues glycine 268, glycine 297, and 318-319 (YS).

This sequence belongs to the dihydroorotate dehydrogenase family. Type 2 subfamily. As to quaternary structure, monomer. The cofactor is FMN.

The protein localises to the cell membrane. The catalysed reaction is (S)-dihydroorotate + a quinone = orotate + a quinol. The protein operates within pyrimidine metabolism; UMP biosynthesis via de novo pathway; orotate from (S)-dihydroorotate (quinone route): step 1/1. Catalyzes the conversion of dihydroorotate to orotate with quinone as electron acceptor. The protein is Dihydroorotate dehydrogenase (quinone) of Citrobacter koseri (strain ATCC BAA-895 / CDC 4225-83 / SGSC4696).